A 658-amino-acid polypeptide reads, in one-letter code: ATP-dependent DNA helicase Rep (658 aa).

One can recognise a UvrD-like helicase ATP-binding domain in the interval 1 to 280; sequence MSLNFNQKNA…IKMEQNYRSY (280 aa). ATP is bound by residues 22–29 and Arg-278; that span reads AGAGSGKT. A UvrD-like helicase C-terminal domain is found at 281 to 564; sequence GRILKAANKL…QLMTLHSSKG (284 aa).

It belongs to the helicase family. UvrD subfamily. As to quaternary structure, homodimer.

The enzyme catalyses Couples ATP hydrolysis with the unwinding of duplex DNA by translocating in the 3'-5' direction.. It carries out the reaction ATP + H2O = ADP + phosphate + H(+). Its function is as follows. Rep helicase is a single-stranded DNA-dependent ATPase involved in DNA replication; it can initiate unwinding at a nick in the DNA. It binds to the single-stranded DNA and acts in a progressive fashion along the DNA in the 3' to 5' direction. This Buchnera aphidicola subsp. Schizaphis graminum (strain Sg) protein is ATP-dependent DNA helicase Rep.